We begin with the raw amino-acid sequence, 119 residues long: Hydrogenase maturation factor HypA (119 aa).

Residue His-2 participates in Ni(2+) binding. Zn(2+) contacts are provided by Cys-73, Cys-76, Cys-89, and Cys-92.

This sequence belongs to the HypA/HybF family.

Involved in the maturation of [NiFe] hydrogenases. Required for nickel insertion into the metal center of the hydrogenase. In Dehalococcoides mccartyi (strain ATCC BAA-2100 / JCM 16839 / KCTC 5957 / BAV1), this protein is Hydrogenase maturation factor HypA.